Consider the following 520-residue polypeptide: ADP,ATP carrier protein 4 (520 aa).

A run of 12 helical transmembrane segments spans residues 43–63 (LSKF…QNLI), 80–100 (ISFL…AIYV), 111–131 (IFYL…YVIF), 166–186 (FSLF…LLFW), 201–221 (FYPL…QFLE), 240–260 (FHTL…IVGI), 305–325 (LIAT…GPWK), 339–359 (AAFI…FVVL), 370–390 (FTAA…FFAV), 399–419 (LIVA…IGAI), 462–482 (LGKS…PSAS), and 485–505 (SISV…FWAV).

This sequence belongs to the ADP/ATP translocase tlc family.

Its subcellular location is the cell membrane. Provides the rickettsial cell with host ATP in exchange for rickettsial ADP. This is an obligate exchange system. This energy acquiring activity is an important component of rickettsial parasitism. This is ADP,ATP carrier protein 4 (tlcD) from Rickettsia bellii (strain RML369-C).